An 819-amino-acid polypeptide reads, in one-letter code: Protein EFR3 homolog A (819 aa).

The segment at 210–230 (DTDSRTGPPASPTTGDKEENP) is disordered.

This sequence belongs to the EFR3 family. In terms of assembly, component of a phosphatidylinositol 4-kinase (PI4K) complex. Palmitoylated at its N-terminus, anchoring the protein to the plasma membrane.

The protein localises to the cell membrane. In terms of biological role, component of a complex required to localize phosphatidylinositol 4-kinase (PI4K) to the plasma membrane. The complex acts as a regulator of phosphatidylinositol 4-phosphate (PtdIns(4)P) synthesis. In the complex, efr3a probably acts as the membrane-anchoring component. The polypeptide is Protein EFR3 homolog A (efr3a) (Xenopus laevis (African clawed frog)).